We begin with the raw amino-acid sequence, 99 residues long: Co-chaperonin GroES (99 aa).

Belongs to the GroES chaperonin family. As to quaternary structure, heptamer of 7 subunits arranged in a ring. Interacts with the chaperonin GroEL.

The protein localises to the cytoplasm. In terms of biological role, together with the chaperonin GroEL, plays an essential role in assisting protein folding. The GroEL-GroES system forms a nano-cage that allows encapsulation of the non-native substrate proteins and provides a physical environment optimized to promote and accelerate protein folding. GroES binds to the apical surface of the GroEL ring, thereby capping the opening of the GroEL channel. This Rhodococcus erythropolis (strain PR4 / NBRC 100887) protein is Co-chaperonin GroES.